The sequence spans 1203 residues: Cingulin (1203 aa).

The interval 7–357 is head; it reads MAEPRGPVDH…VMISSGSTKA (351 aa). The disordered stretch occupies residues 25-48; it reads EPVSGAEMGTLRRGGRRPAKDARA. The ZIM motif lies at 48 to 62; the sequence is ASTYGVAVRVQGIAG. Residues 54-67 are interaction with TJP1/ZO1; sequence AVRVQGIAGQPFVV. The tract at residues 89 to 268 is disordered; the sequence is EASGALGSDF…PPSGFSRSRQ (180 aa). S96, S135, S137, S140, S155, and S165 each carry phosphoserine. Residues 166 to 191 are compositionally biased toward polar residues; the sequence is PGSTIDTAPLSSVDSLINKFDSQLGG. Basic and acidic residues predominate over residues 207 to 231; it reads EQRKRSKSLDSRLPRDTLEERERQS. Residues S214, S217, S258, S276, S338, and S351 each carry the phosphoserine modification. The span at 246-267 shows a compositional bias: low complexity; sequence GSSKQPSQSQSPSPPSGFSRSR. A coiled-coil region spans residues 358 to 1160; the sequence is VAGQGELTRK…SLEKDSWRKA (803 aa). K579 bears the N6-acetyllysine mark. A compositionally biased stretch (basic and acidic residues) spans 883–903; that stretch reads ARREVADAQRQAKDWASEAEK. 2 disordered regions span residues 883–908 and 1160–1181; these read ARRE…SGGL and ASRS…EEFD. The interval 1161–1203 is tail; that stretch reads SRSAAESALKHEGLSSDEEFDSVYDPSSIASLLTESNLQTSSC. S1175, S1176, and S1182 each carry phosphoserine.

The protein belongs to the cingulin family. As to quaternary structure, homodimer. Interacts with TJP1/ZO1 and SPEF1.

The protein resides in the cell junction. Its subcellular location is the tight junction. Functionally, probably plays a role in the formation and regulation of the tight junction (TJ) paracellular permeability barrier. This Papio anubis (Olive baboon) protein is Cingulin.